We begin with the raw amino-acid sequence, 66 residues long: uncharacterized protein (66 aa).

Residues 5 to 59 (VKELRARFGYSQEKLGETVGVTRQTVAAIEKGDYVPSLLLALKICKAFSMKMEDV) enclose the HTH cro/C1-type domain. A DNA-binding region (H-T-H motif) is located at residues 16–35 (QEKLGETVGVTRQTVAAIEK).

This is an uncharacterized protein from Bacillus subtilis (strain 168).